We begin with the raw amino-acid sequence, 551 residues long: Serine beta-lactamase-like protein LACTB, mitochondrial (551 aa).

Residues 1–113 constitute a mitochondrion transit peptide; the sequence is MYRLLSSVTA…RAIESSRDLL (113 aa). The tract at residues 69-101 is disordered; it reads PADPEASGTTELSHEQALSPGSPHTPAPPAARG. Residue Ser-162 is the Acyl-ester intermediate of the active site. Positions 237-287 are disordered; it reads LKMVKGTPPPSDQEKELKEKGGKNNEKSDAPKAKVEQDSEARCRSAKPGKK. The span at 248–279 shows a compositional bias: basic and acidic residues; that stretch reads DQEKELKEKGGKNNEKSDAPKAKVEQDSEARC. An N6-succinyllysine mark is found at Lys-287 and Lys-288. N6-acetyllysine is present on residues Lys-301 and Lys-346.

This sequence belongs to the peptidase S12 family. Expressed predominantly in liver.

It is found in the mitochondrion. In terms of biological role, mitochondrial serine protease that acts as a regulator of mitochondrial lipid metabolism. Acts by decreasing protein levels of PISD, a mitochondrial enzyme that converts phosphatidylserine (PtdSer) to phosphatidylethanolamine (PtdEtn), thereby affecting mitochondrial lipid metabolism. It is unclear whether it acts directly by mediating proteolysis of PISD or by mediating proteolysis of another lipid metabolism protein. Acts as a tumor suppressor that has the ability to inhibit proliferation of multiple types of cancer cells: probably by promoting decreased levels of PISD, thereby affecting mitochondrial lipid metabolism. This chain is Serine beta-lactamase-like protein LACTB, mitochondrial, found in Mus musculus (Mouse).